Consider the following 198-residue polypeptide: Mitrocomin (198 aa).

Positions 1–8 (MSMGSRYA) are excised as a propeptide. 3 EF-hand domains span residues 19 to 54 (KWIA…IICK), 118 to 147 (DALF…AGIQ), and 148 to 183 (QSRG…FWYS). Ca(2+)-binding residues include D32, N34, N36, Q38, E43, D125, D127, N129, S131, E136, D161, D163, D165, K167, and E172.

This sequence belongs to the aequorin family.

Functionally, ca(2+)-dependent bioluminescence photoprotein. Displays an emission peak at 470 nm (blue light). Trace amounts of calcium ion trigger the intramolecular oxidation of the chromophore, coelenterazine into coelenteramide and CO(2) with the concomitant emission of light. The chain is Mitrocomin (MI17) from Mitrocoma cellularia (Cross jellyfish).